The chain runs to 308 residues: Aspartate carbamoyltransferase catalytic subunit (308 aa).

2 residues coordinate carbamoyl phosphate: arginine 55 and threonine 56. Lysine 83 is a binding site for L-aspartate. Positions 105, 133, and 136 each coordinate carbamoyl phosphate. L-aspartate contacts are provided by arginine 166 and arginine 220. The carbamoyl phosphate site is built by glycine 261 and proline 262.

Belongs to the aspartate/ornithine carbamoyltransferase superfamily. ATCase family. In terms of assembly, heterododecamer (2C3:3R2) of six catalytic PyrB chains organized as two trimers (C3), and six regulatory PyrI chains organized as three dimers (R2).

The enzyme catalyses carbamoyl phosphate + L-aspartate = N-carbamoyl-L-aspartate + phosphate + H(+). Its pathway is pyrimidine metabolism; UMP biosynthesis via de novo pathway; (S)-dihydroorotate from bicarbonate: step 2/3. Catalyzes the condensation of carbamoyl phosphate and aspartate to form carbamoyl aspartate and inorganic phosphate, the committed step in the de novo pyrimidine nucleotide biosynthesis pathway. The sequence is that of Aspartate carbamoyltransferase catalytic subunit from Chlorobaculum parvum (strain DSM 263 / NCIMB 8327) (Chlorobium vibrioforme subsp. thiosulfatophilum).